Here is a 528-residue protein sequence, read N- to C-terminus: Equilibrative nucleoside transporter 4 (528 aa).

The Extracellular segment spans residues 1 to 68 (MGSIGSQRLK…EEPVPDDRYH (68 aa)). Residues 69–89 (AIYFAMLLAGVGFLLPYNSFI) form a helical membrane-spanning segment. Topologically, residues 90-101 (TDVDYLHHKYPG) are cytoplasmic. A helical transmembrane segment spans residues 102–122 (TSIVFDMSLTYILVALAAVLL). The Extracellular portion of the chain corresponds to 123-139 (NNVVVERLNLHTRITTG). Residues 140–160 (YLLALGPLLFISICDVWLQLF) form a helical membrane-spanning segment. Topologically, residues 161–166 (SHDQAY) are cytoplasmic. The chain crosses the membrane as a helical span at residues 167 to 187 (AINLAAVGTVAFGCTVQQSSF). Over 188-231 (YGYTGLLPKRYTQGVMTGESTAGVMISLSRILTKLLLPDERAST) the chain is Extracellular. The chain crosses the membrane as a helical span at residues 232–252 (IIFFLVSAGLELLCFLLHLLV). The Cytoplasmic segment spans residues 253–346 (RRSRFVLYYT…LLLHRYVVAR (94 aa)). The helical transmembrane segment at 347–367 (VIWADMLSIAVTYFITLCLFP) threads the bilayer. Topologically, residues 368 to 376 (GLESEIRHC) are extracellular. A helical membrane pass occupies residues 377 to 397 (VLGEWLPILVMAVFNLSDFVG). Over 398 to 411 (KILAALPVEWRGTH) the chain is Cytoplasmic. Residues 412–432 (LLACSCLRVVFIPLFILCVYP) form a helical membrane-spanning segment. Over 433–445 (SGMPALRHPAWPC) the chain is Extracellular. The chain crosses the membrane as a helical span at residues 446-466 (VFSLLMGISNGYFGSVPMILA). Residues 467–481 (AGKVSPKQRELAGNT) lie on the Cytoplasmic side of the membrane. Residues 482–504 (MTVSYMSGLTLGSAVAYCTYSLT) traverse the membrane as a helical segment. Residues 505 to 528 (RDAHGSCFQTATAAAANDSIPVGP) are Extracellular-facing. Residue Asn-521 is glycosylated (N-linked (GlcNAc...) asparagine).

It belongs to the SLC29A/ENT transporter (TC 2.A.57) family. In terms of processing, N-glycosylated. Expressed in heart. Expressed in choroid plexus.

It localises to the cell membrane. The protein localises to the apical cell membrane. The enzyme catalyses serotonin(out) = serotonin(in). It carries out the reaction dopamine(out) = dopamine(in). The catalysed reaction is (R)-noradrenaline(out) = (R)-noradrenaline(in). It catalyses the reaction (R)-adrenaline(out) = (R)-adrenaline(in). The enzyme catalyses histamine(out) = histamine(in). It carries out the reaction tyramine(in) = tyramine(out). The catalysed reaction is guanidine(out) = guanidine(in). It catalyses the reaction adenine(out) = adenine(in). The enzyme catalyses adenosine(in) = adenosine(out). With respect to regulation, activated at acidic pH. Functionally, electrogenic voltage-dependent transporter that mediates the transport of a variety of endogenous bioactive amines, cationic xenobiotics and drugs. Utilizes the physiologic inside-negative membrane potential as a driving force to facilitate cellular uptake of organic cations. Functions as a Na(+)- and Cl(-)-independent bidirectional transporter. Substrate transport is pH-dependent and enhanced under acidic condition, which is most likely the result of allosteric changes in the transporter structure. Implicated in monoamine neurotransmitters uptake such as serotonin, dopamine, adrenaline/epinephrine, noradrenaline/norepinephrine, histamine and tyramine, thereby supporting a role in homeostatic regulation of aminergic neurotransmission in the central nervous system. Also responsible for the uptake of bioactive amines and drugs through the blood-cerebrospinal fluid (CSF) barrier, from the CSF into choroid plexus epithelial cells, thereby playing a significant role in the clearance of cationic neurotoxins, xenobiotics and metabolic waste in the brain. Involved in bidirectional transport of the purine nucleoside adenosine and plays a role in the regulation of extracellular adenosine concentrations in cardiac tissues, in particular during ischemia. May be involved in organic cation uptake from the tubular lumen into renal tubular cells, thereby contributing to organic cation reabsorption in the kidney. Also transports adenine and guanidine. In Mus musculus (Mouse), this protein is Equilibrative nucleoside transporter 4.